Reading from the N-terminus, the 292-residue chain is L-serine dehydratase, alpha chain (292 aa).

It belongs to the iron-sulfur dependent L-serine dehydratase family. Heterooctamer of four alpha chains and four beta chains. The cofactor is [4Fe-4S] cluster.

The enzyme catalyses L-serine = pyruvate + NH4(+). The protein operates within carbohydrate biosynthesis; gluconeogenesis. In Peptoniphilus asaccharolyticus (Peptostreptococcus asaccharolyticus), this protein is L-serine dehydratase, alpha chain (sdhA).